Consider the following 360-residue polypeptide: 3-isopropylmalate dehydrogenase (360 aa).

Residue 76–89 (GPKWDTIERDIRPE) participates in NAD(+) binding. Residues arginine 96, arginine 106, arginine 134, and aspartate 224 each contribute to the substrate site. Positions 224, 248, and 252 each coordinate Mg(2+). 282-294 (GSAPDIAGKGIAN) is a binding site for NAD(+).

This sequence belongs to the isocitrate and isopropylmalate dehydrogenases family. LeuB type 1 subfamily. As to quaternary structure, homodimer. Mg(2+) is required as a cofactor. It depends on Mn(2+) as a cofactor.

Its subcellular location is the cytoplasm. The catalysed reaction is (2R,3S)-3-isopropylmalate + NAD(+) = 4-methyl-2-oxopentanoate + CO2 + NADH. It participates in amino-acid biosynthesis; L-leucine biosynthesis; L-leucine from 3-methyl-2-oxobutanoate: step 3/4. Catalyzes the oxidation of 3-carboxy-2-hydroxy-4-methylpentanoate (3-isopropylmalate) to 3-carboxy-4-methyl-2-oxopentanoate. The product decarboxylates to 4-methyl-2 oxopentanoate. This chain is 3-isopropylmalate dehydrogenase, found in Pseudomonas savastanoi pv. phaseolicola (strain 1448A / Race 6) (Pseudomonas syringae pv. phaseolicola (strain 1448A / Race 6)).